The primary structure comprises 407 residues: Glucan 1,3-beta-glucosidase 1 (407 aa).

An N-terminal signal peptide occupies residues 1 to 22 (MLSFTSVFSFFLHALLLKTAFS). The active-site Proton donor is the Glu-213. Cysteines 295 and 406 form a disulfide. The active-site Nucleophile is Glu-312.

Belongs to the glycosyl hydrolase 5 (cellulase A) family.

The protein localises to the secreted. The catalysed reaction is Successive hydrolysis of beta-D-glucose units from the non-reducing ends of (1-&gt;3)-beta-D-glucans, releasing alpha-glucose.. Beta-glucanases participate in the metabolism of beta-glucan, the main structural component of the cell wall. It could also function biosynthetically as a transglycosylase. This is Glucan 1,3-beta-glucosidase 1 (exg1) from Schizosaccharomyces pombe (strain 972 / ATCC 24843) (Fission yeast).